The primary structure comprises 41 residues: Large ribosomal subunit protein bL36 (41 aa).

Belongs to the bacterial ribosomal protein bL36 family.

The sequence is that of Large ribosomal subunit protein bL36 from Rhodopseudomonas palustris (strain HaA2).